The sequence spans 185 residues: ATP synthase subunit b, cyanelle (185 aa).

Residues 36–58 (LINLLVIFFLLIYQGRPFFTALL) form a helical membrane-spanning segment.

Belongs to the ATPase B chain family. In terms of assembly, F-type ATPases have 2 components, F(1) - the catalytic core - and F(0) - the membrane proton channel. F(1) has five subunits: alpha(3), beta(3), gamma(1), delta(1), epsilon(1). F(0) has four main subunits: a(1), b(1), b'(1) and c(10-14). The alpha and beta chains form an alternating ring which encloses part of the gamma chain. F(1) is attached to F(0) by a central stalk formed by the gamma and epsilon chains, while a peripheral stalk is formed by the delta, b and b' chains.

It is found in the plastid. Its subcellular location is the cyanelle thylakoid membrane. Functionally, f(1)F(0) ATP synthase produces ATP from ADP in the presence of a proton or sodium gradient. F-type ATPases consist of two structural domains, F(1) containing the extramembraneous catalytic core and F(0) containing the membrane proton channel, linked together by a central stalk and a peripheral stalk. During catalysis, ATP synthesis in the catalytic domain of F(1) is coupled via a rotary mechanism of the central stalk subunits to proton translocation. Its function is as follows. Component of the F(0) channel, it forms part of the peripheral stalk, linking F(1) to F(0). The polypeptide is ATP synthase subunit b, cyanelle (Cyanophora paradoxa).